We begin with the raw amino-acid sequence, 103 residues long: SLC35A4 upstream open reading frame protein (103 aa).

The helical transmembrane segment at 62 to 84 (ASAVLGFAVGTCTGIYAAQAYAV) threads the bilayer.

The protein resides in the mitochondrion inner membrane. In terms of biological role, required to maintain cellular respiration. The polypeptide is SLC35A4 upstream open reading frame protein (Homo sapiens (Human)).